The primary structure comprises 245 residues: Extracellular protein ARB_04177 (245 aa).

It is found in the secreted. The chain is Extracellular protein ARB_04177 from Arthroderma benhamiae (strain ATCC MYA-4681 / CBS 112371) (Trichophyton mentagrophytes).